We begin with the raw amino-acid sequence, 433 residues long: Tol-Pal system protein TolB (433 aa).

The first 21 residues, 1 to 21 (MIKRLRGLLVLLCCVAGMAMA), serve as a signal peptide directing secretion.

This sequence belongs to the TolB family. In terms of assembly, the Tol-Pal system is composed of five core proteins: the inner membrane proteins TolA, TolQ and TolR, the periplasmic protein TolB and the outer membrane protein Pal. They form a network linking the inner and outer membranes and the peptidoglycan layer.

It localises to the periplasm. Its function is as follows. Part of the Tol-Pal system, which plays a role in outer membrane invagination during cell division and is important for maintaining outer membrane integrity. This chain is Tol-Pal system protein TolB, found in Pseudomonas entomophila (strain L48).